Here is a 99-residue protein sequence, read N- to C-terminus: MANVQYYDVILKPVITEKSMADMADKKYTFLVHTDANKTMIKDAVEKMFEGTKVASVNTMNLDGKKKRRGRTAGTTSKTKKAIVQLTADSKEIEIFEGL.

The protein belongs to the universal ribosomal protein uL23 family. As to quaternary structure, part of the 50S ribosomal subunit. Contacts protein L29, and trigger factor when it is bound to the ribosome.

One of the early assembly proteins it binds 23S rRNA. One of the proteins that surrounds the polypeptide exit tunnel on the outside of the ribosome. Forms the main docking site for trigger factor binding to the ribosome. The protein is Large ribosomal subunit protein uL23 of Lachnospira eligens (strain ATCC 27750 / DSM 3376 / VPI C15-48 / C15-B4) (Eubacterium eligens).